The sequence spans 406 residues: Aminomethyltransferase, mitochondrial (406 aa).

Residues 1–29 (MRGGLWQLGQSITRRLAQADKKTIGRRCF) constitute a mitochondrion transit peptide. Substrate is bound by residues glutamate 234, arginine 265, and tyrosine 403.

It belongs to the GcvT family. In terms of assembly, the glycine cleavage system is composed of four proteins: P, T, L and H.

Its subcellular location is the mitochondrion. The enzyme catalyses N(6)-[(R)-S(8)-aminomethyldihydrolipoyl]-L-lysyl-[protein] + (6S)-5,6,7,8-tetrahydrofolate = N(6)-[(R)-dihydrolipoyl]-L-lysyl-[protein] + (6R)-5,10-methylene-5,6,7,8-tetrahydrofolate + NH4(+). In terms of biological role, the glycine cleavage system catalyzes the degradation of glycine. The chain is Aminomethyltransferase, mitochondrial (GDCST) from Solanum tuberosum (Potato).